The chain runs to 240 residues: tRNA (guanine-N(7)-)-methyltransferase (240 aa).

Residues 1–20 are disordered; it reads MTESHDTPITSDGEARPHRR. Positions 70, 95, 122, and 145 each coordinate S-adenosyl-L-methionine. The active site involves D145. Substrate-binding positions include K149, D181, and 218–221; that span reads TKFE.

It belongs to the class I-like SAM-binding methyltransferase superfamily. TrmB family.

The enzyme catalyses guanosine(46) in tRNA + S-adenosyl-L-methionine = N(7)-methylguanosine(46) in tRNA + S-adenosyl-L-homocysteine. It participates in tRNA modification; N(7)-methylguanine-tRNA biosynthesis. Its function is as follows. Catalyzes the formation of N(7)-methylguanine at position 46 (m7G46) in tRNA. This chain is tRNA (guanine-N(7)-)-methyltransferase, found in Pseudomonas putida (strain ATCC 700007 / DSM 6899 / JCM 31910 / BCRC 17059 / LMG 24140 / F1).